We begin with the raw amino-acid sequence, 316 residues long: Protoheme IX farnesyltransferase (316 aa).

A run of 9 helical transmembrane segments spans residues Val-34–Asn-54, Pro-55–Leu-75, Ile-95–Phe-115, Ile-118–Phe-138, Ile-155–Gly-175, Ile-182–Phe-202, Ile-228–Leu-250, Ala-254–Met-273, and Phe-287–Ile-307.

This sequence belongs to the UbiA prenyltransferase family. Protoheme IX farnesyltransferase subfamily.

Its subcellular location is the cell inner membrane. The enzyme catalyses heme b + (2E,6E)-farnesyl diphosphate + H2O = Fe(II)-heme o + diphosphate. It participates in porphyrin-containing compound metabolism; heme O biosynthesis; heme O from protoheme: step 1/1. Converts heme B (protoheme IX) to heme O by substitution of the vinyl group on carbon 2 of heme B porphyrin ring with a hydroxyethyl farnesyl side group. The polypeptide is Protoheme IX farnesyltransferase (Rhizobium meliloti (strain 1021) (Ensifer meliloti)).